Reading from the N-terminus, the 304-residue chain is Beta-lactamase-like protein str6 (304 aa).

This sequence belongs to the beta-lactamase family.

The protein operates within mycotoxin biosynthesis. Beta-lactamase-like protein; part of the gene cluster that mediates the biosynthesis of strobilurin A, an antifungal polyketide that contains a key beta-methoxyacrylate toxophore that targets the complex III of the mitochondrial electron transport chain. Strobilurin biosynthesis begins with construction of benzoyl CoA by step-wise elimination of ammonia from phenylalanine by the phenylalanine ammonia-lyase str11, oxygenation by str8 and retro-Claisen reaction to form benzoic acid, which is activated to its CoA thiolester benzoyl CoA by the dedicated CoA ligase str10. Benzoyl CoA forms the starter unit for the highly reducing polyketide synthase stpks1 that produces the polyketide prestrobilutin A. The FAD-dependent oxygenase str9 then catalyzes the key oxidative rearrangement responsible for the creation of the beta-methoxyacrylate toxophore. Str9 performs epoxidation of the 2,3 olefin of prestrobilutin A, followed by Meinwald rearrangement to furnish the aldehyde intermediate. Rapid enolization of the aldehyde intermediate would give the beta-methoxyacrylate skeleton and methylations catalyzed by str2 and str3 complete the synthesis and lead to the production of strobilurin A. The short-chain dehydrogenase stl2 and the dehydrogenase str4 play a role in the shunt pathway leading to the production of bolineol. The cluster encodes no obvious halogenase gene that could be involved in production of strobilurin B, nor any obvious dimethylallyl-transferase that could be involved in the production of strobilurin G. It is possible that unknown proteins encoded in, or near, the cluster (such as str1 or stl1) may form new classes of halogenases or dimethylally-transferases, or that the responsible genes are located elsewhere on the genome. Similarly, proteins encoded by str5/str6 hydrolases appear to have no chemical role in the biosynthesis of strobilurin A. Finally, no obvious self-resistance gene is found within the cluster. The polypeptide is Beta-lactamase-like protein str6 (Strobilurus tenacellus).